The primary structure comprises 635 residues: Threonine--tRNA ligase (635 aa).

The 61-residue stretch at 1 to 61 (MITVRLPDGS…EKDSDLAIIT (61 aa)) folds into the TGS domain. The tract at residues 242–533 (DHRKLGKQLD…LIEHYAGALP (292 aa)) is catalytic. Zn(2+)-binding residues include Cys333, His384, and His510.

It belongs to the class-II aminoacyl-tRNA synthetase family. In terms of assembly, homodimer. Zn(2+) is required as a cofactor.

The protein localises to the cytoplasm. It carries out the reaction tRNA(Thr) + L-threonine + ATP = L-threonyl-tRNA(Thr) + AMP + diphosphate + H(+). Catalyzes the attachment of threonine to tRNA(Thr) in a two-step reaction: L-threonine is first activated by ATP to form Thr-AMP and then transferred to the acceptor end of tRNA(Thr). Also edits incorrectly charged L-seryl-tRNA(Thr). This Janthinobacterium sp. (strain Marseille) (Minibacterium massiliensis) protein is Threonine--tRNA ligase.